The sequence spans 397 residues: Phosphoglycerate kinase (397 aa).

Residues 21–23 (DFN), R37, 60–63 (HLGR), R119, and R152 contribute to the substrate site. ATP is bound by residues K203, G294, E325, and 354 to 357 (GGDS).

Belongs to the phosphoglycerate kinase family. In terms of assembly, monomer.

It localises to the cytoplasm. The enzyme catalyses (2R)-3-phosphoglycerate + ATP = (2R)-3-phospho-glyceroyl phosphate + ADP. Its pathway is carbohydrate degradation; glycolysis; pyruvate from D-glyceraldehyde 3-phosphate: step 2/5. This is Phosphoglycerate kinase from Chlorobium luteolum (strain DSM 273 / BCRC 81028 / 2530) (Pelodictyon luteolum).